The sequence spans 438 residues: ATP-dependent RNA helicase SUB2 (438 aa).

Over residues 1–19 (MSHEGEEDLLEYSDNEQEI) the composition is skewed to acidic residues. The interval 1 to 44 (MSHEGEEDLLEYSDNEQEIQVDNTKATEVAGNGEEAADGKDGDK) is disordered. A Q motif motif is present at residues 54 to 82 (TGFKDFLLKPELSRAIIDCGFEHPSEVQQ). One can recognise a Helicase ATP-binding domain in the interval 85-260 (IPQSIHGTDV…RRFLQNPLEI (176 aa)). 98–105 (AKSGLGKT) serves as a coordination point for ATP. The DECD box signature appears at 207–210 (DECD). Positions 272–433 (GLQQYYIRLE…EFPEEGVDPS (162 aa)) constitute a Helicase C-terminal domain.

The protein belongs to the DEAD box helicase family. DECD subfamily.

The protein resides in the nucleus. It catalyses the reaction ATP + H2O = ADP + phosphate + H(+). In terms of biological role, ATP-binding RNA helicase involved in transcription elongation and required for the export of mRNA out of the nucleus. SUB2 also plays a role in pre-mRNA splicing and spliceosome assembly. May be involved in rDNA and telomeric silencing, and maintenance of genome integrity. In Eremothecium gossypii (strain ATCC 10895 / CBS 109.51 / FGSC 9923 / NRRL Y-1056) (Yeast), this protein is ATP-dependent RNA helicase SUB2 (SUB2).